The sequence spans 274 residues: tRNA pseudouridine synthase A (274 aa).

Asp-60 acts as the Nucleophile in catalysis. Substrate is bound at residue Tyr-118.

Belongs to the tRNA pseudouridine synthase TruA family. In terms of assembly, homodimer.

The catalysed reaction is uridine(38/39/40) in tRNA = pseudouridine(38/39/40) in tRNA. Functionally, formation of pseudouridine at positions 38, 39 and 40 in the anticodon stem and loop of transfer RNAs. This Picosynechococcus sp. (strain ATCC 27264 / PCC 7002 / PR-6) (Agmenellum quadruplicatum) protein is tRNA pseudouridine synthase A.